We begin with the raw amino-acid sequence, 239 residues long: tRNA (guanine-N(7)-)-methyltransferase (239 aa).

4 residues coordinate S-adenosyl-L-methionine: Glu69, Glu94, Asp121, and Asp144. The active site involves Asp144. Lys148 serves as a coordination point for substrate. The interval 150-155 (RHNKRR) is interaction with RNA. Substrate contacts are provided by residues Asp180 and 217-220 (TKFE).

This sequence belongs to the class I-like SAM-binding methyltransferase superfamily. TrmB family. As to quaternary structure, monomer.

It catalyses the reaction guanosine(46) in tRNA + S-adenosyl-L-methionine = N(7)-methylguanosine(46) in tRNA + S-adenosyl-L-homocysteine. It participates in tRNA modification; N(7)-methylguanine-tRNA biosynthesis. Its function is as follows. Catalyzes the formation of N(7)-methylguanine at position 46 (m7G46) in tRNA. The sequence is that of tRNA (guanine-N(7)-)-methyltransferase from Salmonella paratyphi A (strain ATCC 9150 / SARB42).